The chain runs to 511 residues: Maturase K (511 aa).

Belongs to the intron maturase 2 family. MatK subfamily.

It is found in the plastid. It localises to the chloroplast. Functionally, usually encoded in the trnK tRNA gene intron. Probably assists in splicing its own and other chloroplast group II introns. This Hordeum secalinum (Meadow barley) protein is Maturase K.